We begin with the raw amino-acid sequence, 196 residues long: DNA replication complex GINS protein PSF1 (196 aa).

This sequence belongs to the GINS1/PSF1 family. In terms of assembly, component of the GINS complex which is a heterotetramer of GINS1, GINS2, GINS3 and GINS4. Forms a stable subcomplex with GINS4. GINS complex interacts with DNA primase in vitro. Component of the CMG helicase complex, a hexameric ring of related MCM2-7 subunits stabilized by CDC45 and the tetrameric GINS complex.

The protein localises to the nucleus. It localises to the chromosome. Functionally, required for correct functioning of the GINS complex, a complex that plays an essential role in the initiation of DNA replication, and progression of DNA replication forks. GINS complex is a core component of CDC45-MCM-GINS (CMG) helicase, the molecular machine that unwinds template DNA during replication, and around which the replisome is built. In Mus musculus (Mouse), this protein is DNA replication complex GINS protein PSF1 (Gins1).